The sequence spans 482 residues: ATP synthase subunit beta (482 aa).

Residue 162-169 (GGAGVGKT) participates in ATP binding.

In terms of assembly, F-type ATPases have 2 components, CF(1) - the catalytic core - and CF(0) - the membrane proton channel. CF(1) has five subunits: alpha(3), beta(3), gamma(1), delta(1), epsilon(1). CF(0) has four main subunits: a(1), b(1), b'(1) and c(9-12).

The protein localises to the cellular thylakoid membrane. It catalyses the reaction ATP + H2O + 4 H(+)(in) = ADP + phosphate + 5 H(+)(out). With respect to regulation, inhibited by dicyclohexylcarbodiimide. In terms of biological role, produces ATP from ADP in the presence of a proton gradient across the membrane. The catalytic sites are hosted primarily by the beta subunits. The complex from the organism is particularly stable to disruption and remains functional after 6 hrs at 55 degrees Celsius. This is ATP synthase subunit beta from Thermosynechococcus vestitus (strain NIES-2133 / IAM M-273 / BP-1).